The primary structure comprises 176 residues: Large ribosomal subunit protein uL6 (176 aa).

Belongs to the universal ribosomal protein uL6 family. As to quaternary structure, part of the 50S ribosomal subunit.

Its function is as follows. This protein binds to the 23S rRNA, and is important in its secondary structure. It is located near the subunit interface in the base of the L7/L12 stalk, and near the tRNA binding site of the peptidyltransferase center. This chain is Large ribosomal subunit protein uL6, found in Burkholderia thailandensis (strain ATCC 700388 / DSM 13276 / CCUG 48851 / CIP 106301 / E264).